A 759-amino-acid chain; its full sequence is Phosphoribosylformylglycinamidine synthase subunit PurL (759 aa).

H46 is an active-site residue. The ATP site is built by Y49 and K88. Residue E90 coordinates Mg(2+). Substrate is bound by residues 91–94 (SHNH) and R113. H92 serves as the catalytic Proton acceptor. Residue D114 participates in Mg(2+) binding. Substrate is bound at residue Q237. D265 contacts Mg(2+). 309–311 (ESQ) lines the substrate pocket. 2 residues coordinate ATP: D498 and G535. N536 is a binding site for Mg(2+). S538 is a substrate binding site.

Belongs to the FGAMS family. Monomer. Part of the FGAM synthase complex composed of 1 PurL, 1 PurQ and 2 PurS subunits.

The protein resides in the cytoplasm. The enzyme catalyses N(2)-formyl-N(1)-(5-phospho-beta-D-ribosyl)glycinamide + L-glutamine + ATP + H2O = 2-formamido-N(1)-(5-O-phospho-beta-D-ribosyl)acetamidine + L-glutamate + ADP + phosphate + H(+). Its pathway is purine metabolism; IMP biosynthesis via de novo pathway; 5-amino-1-(5-phospho-D-ribosyl)imidazole from N(2)-formyl-N(1)-(5-phospho-D-ribosyl)glycinamide: step 1/2. In terms of biological role, part of the phosphoribosylformylglycinamidine synthase complex involved in the purines biosynthetic pathway. Catalyzes the ATP-dependent conversion of formylglycinamide ribonucleotide (FGAR) and glutamine to yield formylglycinamidine ribonucleotide (FGAM) and glutamate. The FGAM synthase complex is composed of three subunits. PurQ produces an ammonia molecule by converting glutamine to glutamate. PurL transfers the ammonia molecule to FGAR to form FGAM in an ATP-dependent manner. PurS interacts with PurQ and PurL and is thought to assist in the transfer of the ammonia molecule from PurQ to PurL. The polypeptide is Phosphoribosylformylglycinamidine synthase subunit PurL (Anaeromyxobacter dehalogenans (strain 2CP-1 / ATCC BAA-258)).